The primary structure comprises 104 residues: Large ribosomal subunit protein bL21 (104 aa).

It belongs to the bacterial ribosomal protein bL21 family. In terms of assembly, part of the 50S ribosomal subunit. Contacts protein L20.

Its function is as follows. This protein binds to 23S rRNA in the presence of protein L20. In Helicobacter pylori (strain P12), this protein is Large ribosomal subunit protein bL21.